Consider the following 228-residue polypeptide: Urease accessory protein UreF (228 aa).

This sequence belongs to the UreF family. UreD, UreF and UreG form a complex that acts as a GTP-hydrolysis-dependent molecular chaperone, activating the urease apoprotein by helping to assemble the nickel containing metallocenter of UreC. The UreE protein probably delivers the nickel.

The protein resides in the cytoplasm. In terms of biological role, required for maturation of urease via the functional incorporation of the urease nickel metallocenter. The chain is Urease accessory protein UreF from Prochlorococcus marinus (strain MIT 9215).